Here is a 29-residue protein sequence, read N- to C-terminus: Cytochrome b6-f complex subunit 8 (29 aa).

A helical transmembrane segment spans residues Ile3–Val23.

It belongs to the PetN family. In terms of assembly, the 4 large subunits of the cytochrome b6-f complex are cytochrome b6, subunit IV (17 kDa polypeptide, PetD), cytochrome f and the Rieske protein, while the 4 small subunits are PetG, PetL, PetM and PetN. The complex functions as a dimer.

It localises to the plastid. It is found in the chloroplast thylakoid membrane. Its function is as follows. Component of the cytochrome b6-f complex, which mediates electron transfer between photosystem II (PSII) and photosystem I (PSI), cyclic electron flow around PSI, and state transitions. This Staurastrum punctulatum (Green alga) protein is Cytochrome b6-f complex subunit 8.